The following is a 407-amino-acid chain: Protein ZNF365 (407 aa).

Ser16 bears the Phosphoserine mark. Residues 26–51 form a C2H2-type; degenerate zinc finger; sequence LRCPRCGDHTRFRSLSSLRAHLEFSH. Ser138 carries the phosphoserine modification. Residues 169-297 are a coiled coil; it reads VEAVDRTIEK…QLEYYQSQQA (129 aa). Residue Thr175 is modified to Phosphothreonine. A disordered region spans residues 347–392; the sequence is LKKAKDDRASMQPAKAIHEQAESSRDLCRPPKKGELLGFGRKGNIR. Positions 362-381 are enriched in basic and acidic residues; it reads AIHEQAESSRDLCRPPKKGE. Ser369 carries the phosphoserine modification.

In terms of assembly, homodimer. Interacts with NDE1 and NDEL1. Does not interact with TUBG1. Interacts with DISC1. Interacts with PARP1. Interacts with MCRS1. As to expression, isoform 1 is expressed in brain. Isoform 2 is expressed in placenta and at low level in lung and liver. Isoform 3 is expressed in kidney and pancreas. Isoform 1 is expressed exclusively in brain.

It is found in the cytoplasm. Its subcellular location is the cytoskeleton. The protein resides in the microtubule organizing center. It localises to the centrosome. Involved in the regulation of neurogenesis. Negatively regulates neurite outgrowth. Involved in the morphogenesis of basket cells in the somatosensory cortex during embryogenesis. Involved in the positive regulation of oligodendrocyte differentiation during postnatal growth. Involved in dendritic arborization, morphogenesis of spine density dendrite, and establishment of postsynaptic dendrite density in cortical pyramidal neurons. Involved in homologous recombination (HR) repair pathway. Required for proper resolution of DNA double-strand breaks (DSBs) by HR. Is required for recovery of stalled replication forks, and directly contributes to genomic stability. Interacts with PARP1 and mediates MRE11-dependent DNA end resection during replication fork recovery. Contributes to genomic stability by preventing telomere dysfunction. The protein is Protein ZNF365 (ZNF365) of Homo sapiens (Human).